The primary structure comprises 277 residues: tRNA uridine(34) hydroxylase (277 aa).

The region spanning 126–221 (SSPDVHVIDT…YLETVRGDDS (96 aa)) is the Rhodanese domain. The active-site Cysteine persulfide intermediate is the cysteine 181.

This sequence belongs to the TrhO family.

It carries out the reaction uridine(34) in tRNA + AH2 + O2 = 5-hydroxyuridine(34) in tRNA + A + H2O. In terms of biological role, catalyzes oxygen-dependent 5-hydroxyuridine (ho5U) modification at position 34 in tRNAs. The chain is tRNA uridine(34) hydroxylase from Anaplasma marginale (strain Florida).